We begin with the raw amino-acid sequence, 299 residues long: Meso-diaminopimelate D-dehydrogenase (299 aa).

NADP(+) is bound by residues 11–14, Arg-36, 67–70, 90–92, and 119–123; these read YGNI, CTPT, SFD, and AGWDP. Residues Asp-92, Asp-122, Phe-146, 152 to 153, Thr-171, Arg-181, His-227, and Asn-253 each bind substrate; that span reads MG.

This sequence belongs to the diaminopimelate dehydrogenase family. As to quaternary structure, homodimer.

The enzyme catalyses meso-2,6-diaminopimelate + NADP(+) + H2O = (S)-2-amino-6-oxoheptanedioate + NH4(+) + NADPH + H(+). Its pathway is amino-acid biosynthesis; L-lysine biosynthesis via DAP pathway; DL-2,6-diaminopimelate from (S)-tetrahydrodipicolinate: step 1/1. In terms of biological role, catalyzes the reversible NADPH-dependent reductive amination of L-2-amino-6-oxopimelate, the acyclic form of L-tetrahydrodipicolinate, to generate the meso compound, D,L-2,6-diaminopimelate. Probably plays a role in lysine biosynthesis. Exhibits a high substrate specificity for meso-2,6-diaminopimelate (m-DAP), since the activity with L,L-2,6-diaminopimelate is less than 5% of the activity observed with m-DAP. Can use NAD(+) only very poorly since the activity observed in the presence of NAD(+) is about 14% of that with NADP(+). In Bacteroides fragilis (strain ATCC 25285 / DSM 2151 / CCUG 4856 / JCM 11019 / LMG 10263 / NCTC 9343 / Onslow / VPI 2553 / EN-2), this protein is Meso-diaminopimelate D-dehydrogenase (ddh).